We begin with the raw amino-acid sequence, 217 residues long: Probable transaldolase (217 aa).

Catalysis depends on Lys83, which acts as the Schiff-base intermediate with substrate.

Belongs to the transaldolase family. Type 3B subfamily.

The protein localises to the cytoplasm. It carries out the reaction D-sedoheptulose 7-phosphate + D-glyceraldehyde 3-phosphate = D-erythrose 4-phosphate + beta-D-fructose 6-phosphate. Its pathway is carbohydrate degradation; pentose phosphate pathway; D-glyceraldehyde 3-phosphate and beta-D-fructose 6-phosphate from D-ribose 5-phosphate and D-xylulose 5-phosphate (non-oxidative stage): step 2/3. In terms of biological role, transaldolase is important for the balance of metabolites in the pentose-phosphate pathway. The polypeptide is Probable transaldolase (Caulobacter sp. (strain K31)).